A 275-amino-acid chain; its full sequence is Activator of basal transcription 1 (275 aa).

M1 is subject to N-acetylmethionine. Composition is skewed to acidic residues over residues 1 to 10 (MEVEGLELDT) and 25 to 34 (AEEEQEESED). Positions 1–39 (MEVEGLELDTAELGPLEGSHQKLEAEEEQEESEDAAGGS) are disordered. In terms of domain architecture, RRM spans 46 to 145 (GIVYLGHIPP…RRRSPFRYDL (100 aa)). Positions 164–194 (AFERQVRRQRLRAEVAQAKRETDFYLRSVER) form a coiled coil. The interval 200-275 (AADGDSTRPN…RGNSSPARNS (76 aa)) is disordered. Polar residues predominate over residues 262–275 (PSESRGNSSPARNS).

This sequence belongs to the ESF2/ABP1 family. In terms of assembly, interacts with ESF1/ABTAP. Interacts with IGHMBP2.

The protein resides in the nucleus. The protein localises to the nucleolus. Functionally, could be a novel TATA-binding protein (TBP) which can function as a basal transcription activator. Can act as a regulator of basal transcription for class II genes. In Bos taurus (Bovine), this protein is Activator of basal transcription 1 (ABT1).